The following is a 242-amino-acid chain: 1-(5-phosphoribosyl)-5-[(5-phosphoribosylamino)methylideneamino] imidazole-4-carboxamide isomerase (242 aa).

Aspartate 8 (proton acceptor) is an active-site residue. Catalysis depends on aspartate 129, which acts as the Proton donor.

It belongs to the HisA/HisF family.

It localises to the cytoplasm. The catalysed reaction is 1-(5-phospho-beta-D-ribosyl)-5-[(5-phospho-beta-D-ribosylamino)methylideneamino]imidazole-4-carboxamide = 5-[(5-phospho-1-deoxy-D-ribulos-1-ylimino)methylamino]-1-(5-phospho-beta-D-ribosyl)imidazole-4-carboxamide. The protein operates within amino-acid biosynthesis; L-histidine biosynthesis; L-histidine from 5-phospho-alpha-D-ribose 1-diphosphate: step 4/9. This chain is 1-(5-phosphoribosyl)-5-[(5-phosphoribosylamino)methylideneamino] imidazole-4-carboxamide isomerase, found in Dictyoglomus turgidum (strain DSM 6724 / Z-1310).